The chain runs to 706 residues: Elongation factor G (706 aa).

The region spanning 8-290 (NRYRNIGICA…AVIDYLPAPT (283 aa)) is the tr-type G domain. Residues 17–24 (AHVDAGKT), 88–92 (DTPGH), and 142–145 (NKMD) contribute to the GTP site.

Belongs to the TRAFAC class translation factor GTPase superfamily. Classic translation factor GTPase family. EF-G/EF-2 subfamily.

It localises to the cytoplasm. Catalyzes the GTP-dependent ribosomal translocation step during translation elongation. During this step, the ribosome changes from the pre-translocational (PRE) to the post-translocational (POST) state as the newly formed A-site-bound peptidyl-tRNA and P-site-bound deacylated tRNA move to the P and E sites, respectively. Catalyzes the coordinated movement of the two tRNA molecules, the mRNA and conformational changes in the ribosome. The sequence is that of Elongation factor G from Stutzerimonas stutzeri (strain A1501) (Pseudomonas stutzeri).